A 206-amino-acid polypeptide reads, in one-letter code: Phosphoribosylglycinamide formyltransferase (206 aa).

13 to 15 (GTN) contributes to the N(1)-(5-phospho-beta-D-ribosyl)glycinamide binding site. (6R)-10-formyltetrahydrofolate is bound by residues 99–102 (MIIL) and Asn-121. Residue His-123 is the Proton donor of the active site. (6R)-10-formyltetrahydrofolate is bound at residue Asp-163. A N(1)-(5-phospho-beta-D-ribosyl)glycinamide-binding site is contributed by Glu-192.

It belongs to the GART family.

It carries out the reaction N(1)-(5-phospho-beta-D-ribosyl)glycinamide + (6R)-10-formyltetrahydrofolate = N(2)-formyl-N(1)-(5-phospho-beta-D-ribosyl)glycinamide + (6S)-5,6,7,8-tetrahydrofolate + H(+). Its pathway is purine metabolism; IMP biosynthesis via de novo pathway; N(2)-formyl-N(1)-(5-phospho-D-ribosyl)glycinamide from N(1)-(5-phospho-D-ribosyl)glycinamide (10-formyl THF route): step 1/1. This chain is Phosphoribosylglycinamide formyltransferase (purN), found in Dictyostelium discoideum (Social amoeba).